Consider the following 148-residue polypeptide: MLNQLTLSLQFGKLENPALHRGALPRHKVARWLRHALQSDAEITVRIVDTEEGQALNRDYRHKDYATNVLTFDYTQEPVVTADLVLCAPVVAQEAKEQGKTLQEHYAHLLVHGALHAQGWDHEAEEDAQVMELRESEIMARLGFENPY.

Zn(2+) contacts are provided by His-112, His-116, and His-122.

Belongs to the endoribonuclease YbeY family. Zn(2+) serves as cofactor.

Its subcellular location is the cytoplasm. Single strand-specific metallo-endoribonuclease involved in late-stage 70S ribosome quality control and in maturation of the 3' terminus of the 16S rRNA. The polypeptide is Endoribonuclease YbeY (Albidiferax ferrireducens (strain ATCC BAA-621 / DSM 15236 / T118) (Rhodoferax ferrireducens)).